The chain runs to 464 residues: Desmin (464 aa).

A Blocked amino end (Ser) modification is found at Ser-2. The head stretch occupies residues 2–100 (SQSYSSSQRV…QEFLQTRTNE (99 aa)). Residues Ser-7 and Ser-23 each carry the phosphoserine; by CDK1 modification. Thr-65 is modified (phosphothreonine; by CDK1). An IF rod domain is found at 100–408 (EKVELQELND…KLLEGEENRI (309 aa)). The segment at 101–133 (KVELQELNDRFANYIEKVRFLEQQNALMVAEVN) is coil 1A. The interval 134-143 (RLRGKEPTRV) is linker 1. The segment at 144-244 (AEMYEEELRE…HEEEIRELQA (101 aa)) is coil 1B. The linker 12 stretch occupies residues 245–260 (QLQEQHIQVEMDISKP). Residues 261–279 (DLTAALRDIRAQYESIAAK) form a coil 2A region. The linker 2 stretch occupies residues 280-287 (NIAEAEEW). The tract at residues 288–404 (YKSKVSDLTQ…ATYRKLLEGE (117 aa)) is coil 2B. The interval 405–464 (ENRISIPMHQTFASALNFRETSPDQRGSEVHTKKTVMIKTIETRDGEVVSEATQQQHEVL) is tail.

Belongs to the intermediate filament family. As to quaternary structure, homomer.

It is found in the cytoplasm. The protein localises to the myofibril. It localises to the sarcomere. Its subcellular location is the z line. The protein resides in the cell membrane. It is found in the sarcolemma. In terms of biological role, muscle-specific type III intermediate filament essential for proper muscular structure and function. Plays a crucial role in maintaining the structure of sarcomeres, inter-connecting the Z-disks and forming the myofibrils, linking them not only to the sarcolemmal cytoskeleton, but also to the nucleus and mitochondria, thus providing strength for the muscle fiber during activity. In adult striated muscle they form a fibrous network connecting myofibrils to each other and to the plasma membrane from the periphery of the Z-line structures. This is Desmin (DES) from Gallus gallus (Chicken).